A 291-amino-acid chain; its full sequence is Lys-63-specific deubiquitinase BRCC36-like (291 aa).

In terms of domain architecture, MPN spans 12-179 (VYLESDAFLV…YTCFQSVQAS (168 aa)). His-122, His-124, and Asp-135 together coordinate Zn(2+). Residues 122-135 (HSHPHITVWPSHVD) carry the JAMM motif motif. Positions 259 to 286 (LQWLEDRLEQNQQRLQELEQEKEDLMEE) form a coiled coil.

The protein belongs to the peptidase M67A family. BRCC36 subfamily.

Its function is as follows. Metalloprotease that specifically cleaves 'Lys-63'-linked polyubiquitin chains. This Mus musculus (Mouse) protein is Lys-63-specific deubiquitinase BRCC36-like.